The chain runs to 283 residues: NADPH-dependent 7-cyano-7-deazaguanine reductase (283 aa).

90 to 92 is a substrate binding site; the sequence is IES. 92 to 93 contributes to the NADPH binding site; that stretch reads SK. The Thioimide intermediate role is filled by Cys191. Asp198 serves as the catalytic Proton donor. 230–231 is a binding site for substrate; it reads HE. NADPH is bound at residue 259–260; the sequence is RG.

Belongs to the GTP cyclohydrolase I family. QueF type 2 subfamily. As to quaternary structure, homodimer.

The protein resides in the cytoplasm. The enzyme catalyses 7-aminomethyl-7-carbaguanine + 2 NADP(+) = 7-cyano-7-deazaguanine + 2 NADPH + 3 H(+). It participates in tRNA modification; tRNA-queuosine biosynthesis. In terms of biological role, catalyzes the NADPH-dependent reduction of 7-cyano-7-deazaguanine (preQ0) to 7-aminomethyl-7-deazaguanine (preQ1). This chain is NADPH-dependent 7-cyano-7-deazaguanine reductase, found in Tolumonas auensis (strain DSM 9187 / NBRC 110442 / TA 4).